A 476-amino-acid chain; its full sequence is Ribosomal RNA small subunit methyltransferase F (476 aa).

S-adenosyl-L-methionine is bound by residues 125–131 (AAAPGSK), E149, D176, and D194. C247 serves as the catalytic Nucleophile.

Belongs to the class I-like SAM-binding methyltransferase superfamily. RsmB/NOP family.

It is found in the cytoplasm. It carries out the reaction cytidine(1407) in 16S rRNA + S-adenosyl-L-methionine = 5-methylcytidine(1407) in 16S rRNA + S-adenosyl-L-homocysteine + H(+). Its function is as follows. Specifically methylates the cytosine at position 1407 (m5C1407) of 16S rRNA. The chain is Ribosomal RNA small subunit methyltransferase F from Aeromonas salmonicida (strain A449).